The primary structure comprises 151 residues: Cell division protein SepF (151 aa).

A compositionally biased stretch (acidic residues) spans 17–29; sequence DNEDDYQDQEDEQ. Positions 17-42 are disordered; that stretch reads DNEDDYQDQEDEQAQQPAPEQPVDNH.

The protein belongs to the SepF family. Homodimer. Interacts with FtsZ.

The protein localises to the cytoplasm. Cell division protein that is part of the divisome complex and is recruited early to the Z-ring. Probably stimulates Z-ring formation, perhaps through the cross-linking of FtsZ protofilaments. Its function overlaps with FtsA. The chain is Cell division protein SepF from Lacticaseibacillus casei (strain BL23) (Lactobacillus casei).